We begin with the raw amino-acid sequence, 357 residues long: 5-hydroxytryptamine receptor 5A (357 aa).

The Extracellular portion of the chain corresponds to 1–36 (MDLPINLTSFSLSTPSTLEPNRSLDTEALRTSQSFL). 2 N-linked (GlcNAc...) asparagine glycosylation sites follow: Asn-6 and Asn-21. The helical transmembrane segment at 37-63 (SAFRVLVLTLLGFLAAATFTWNLLVLA) threads the bilayer. The Cytoplasmic portion of the chain corresponds to 64–76 (TILRVRTFHRVPH). A helical transmembrane segment spans residues 77–103 (NLVASMAISDVLVAVLVMPLSLVHELS). At 104-114 (GRRWQLGRRLC) the chain is on the extracellular side. A disulfide bond links Cys-114 and Cys-192. The helical transmembrane segment at 115 to 137 (QLWIACDVLCCTASIWNVTAIAL) threads the bilayer. Asp-121 is a binding site for serotonin. The Cytoplasmic segment spans residues 138-155 (DRYWSITRHLEYTLRARK). Residues 156 to 176 (RVSNVMILLTWALSAVISLAP) traverse the membrane as a helical segment. The Extracellular segment spans residues 177-198 (LLFGWGETYSELSEECQVSREP). The chain crosses the membrane as a helical span at residues 199-220 (SYTVFSTVGAFYLPLCVVLFVY). The Cytoplasmic portion of the chain corresponds to 221 to 287 (WKIYKAAKFR…QKEQRAALMV (67 aa)). A helical transmembrane segment spans residues 288 to 312 (GILIGVFVLCWFPFFVTELISPLCS). The Extracellular segment spans residues 313 to 314 (WD). The chain crosses the membrane as a helical span at residues 315 to 339 (IPALWKSIFLWLGYSNSFFNPLIYT). Residues 340-357 (AFNRSYSSAFKVFFSKQQ) lie on the Cytoplasmic side of the membrane.

Belongs to the G-protein coupled receptor 1 family. In terms of tissue distribution, central nervous system.

The protein resides in the cell membrane. Functionally, G-protein coupled receptor for 5-hydroxytryptamine (serotonin), a biogenic hormone that functions as a neurotransmitter, a hormone and a mitogen. Also functions as a receptor for ergot alkaloid derivatives and other psychoactive substances. Ligand binding causes a conformation change that triggers signaling via guanine nucleotide-binding proteins (G proteins) and modulates the activity of downstream effectors. Htr5a is coupled to G(i)/G(o) G alpha proteins and mediates inhibitory neurotransmission: signaling inhibits adenylate cyclase activity and activates a phosphatidylinositol-calcium second messenger system that regulates the release of Ca(2+) ions from intracellular stores. In Rattus norvegicus (Rat), this protein is 5-hydroxytryptamine receptor 5A.